The chain runs to 157 residues: Beta-defensin 125 (157 aa).

The first 20 residues, 1 to 20, serve as a signal peptide directing secretion; the sequence is MNILMLTFIICGLLTQVTKG. Cystine bridges form between cysteine 27/cysteine 55, cysteine 35/cysteine 49, and cysteine 39/cysteine 56. The tract at residues 109-157 is disordered; that stretch reads GETMTPETNTPETTVPPSETTTPETTMPPSETATSETMPPPSQTALTHN. Low complexity predominate over residues 110 to 145; the sequence is ETMTPETNTPETTVPPSETTTPETTMPPSETATSET.

It belongs to the beta-defensin family.

The protein resides in the secreted. Its function is as follows. Has antibacterial activity. This Gorilla gorilla gorilla (Western lowland gorilla) protein is Beta-defensin 125 (DEFB125).